The following is a 349-amino-acid chain: Cobalt-precorrin-5B C(1)-methyltransferase (349 aa).

The protein belongs to the CbiD family.

It catalyses the reaction Co-precorrin-5B + S-adenosyl-L-methionine = Co-precorrin-6A + S-adenosyl-L-homocysteine. It participates in cofactor biosynthesis; adenosylcobalamin biosynthesis; cob(II)yrinate a,c-diamide from sirohydrochlorin (anaerobic route): step 6/10. Functionally, catalyzes the methylation of C-1 in cobalt-precorrin-5B to form cobalt-precorrin-6A. The protein is Cobalt-precorrin-5B C(1)-methyltransferase of Saccharolobus islandicus (strain M.16.27) (Sulfolobus islandicus).